We begin with the raw amino-acid sequence, 506 residues long: MKEYQVYLERARSRQQDFLYPLIFREYIYGLAYSHNWSRSIFVENGGYDNKYSLLNVKRLITRMYQQNHLIISANDSPKNPFWGYNKNFDSQIISEGFAIVVEIPFFLQLNSSLKEAEIIKSYKNVRSIHSIFPFLEDKFTYLHYVSDIRIPYPIHLEILVQILRYWVKDAPFFHLLRLFLYHFSNWNRFITTKKSISTFSKRNPRLFLFLYNFYVCEYESIFLFLRNKSSHLRLKSFSVFLERIFFYAKREHLVEVFAKDFSYPLPFFKDPNIHYVRYQGKCILASKNVPFLMNKWKHYFIHLWQCFFDVWSQPRTININQLSEHSFQLLGYFSNVQLNRSVVRSQMLQNTFLIEIVSKKLDIIVPIIPLIRSLAKAKFCNVLGHPISKPVWADSSDFDIIERFLRICRNLSHYYNGSSKKKSLYRIKYILRLSCIKTLACKHKSTVRAFLKRSGSEELLEEFFTEEEEILSLIFPRDSFTLHRFYRNRIWYLDILFSNDLVNDE.

The protein belongs to the intron maturase 2 family. MatK subfamily.

It localises to the plastid. The protein localises to the chloroplast. Functionally, usually encoded in the trnK tRNA gene intron. Probably assists in splicing its own and other chloroplast group II introns. This chain is Maturase K, found in Trifolium striatum (Knotted clover).